Here is a 334-residue protein sequence, read N- to C-terminus: Phosphate acyltransferase (334 aa).

It belongs to the PlsX family. As to quaternary structure, homodimer. Probably interacts with PlsY.

It localises to the cytoplasm. It catalyses the reaction a fatty acyl-[ACP] + phosphate = an acyl phosphate + holo-[ACP]. The protein operates within lipid metabolism; phospholipid metabolism. Functionally, catalyzes the reversible formation of acyl-phosphate (acyl-PO(4)) from acyl-[acyl-carrier-protein] (acyl-ACP). This enzyme utilizes acyl-ACP as fatty acyl donor, but not acyl-CoA. The protein is Phosphate acyltransferase of Streptococcus thermophilus (strain CNRZ 1066).